Consider the following 125-residue polypeptide: Type II secretion system protein I (125 aa).

Residues M1–G5 constitute a propeptide, leader sequence. An N-methylmethionine modification is found at M6. The helical transmembrane segment at M6–L26 threads the bilayer.

This sequence belongs to the GSP I family. Type II secretion is composed of four main components: the outer membrane complex, the inner membrane complex, the cytoplasmic secretion ATPase and the periplasm-spanning pseudopilus. Interacts with core component OutG. In terms of processing, cleaved by prepilin peptidase. Methylated by prepilin peptidase at the amino group of the N-terminal methionine once the leader sequence is cleaved by prepilin peptidase.

The protein localises to the cell inner membrane. In terms of biological role, component of the type II secretion system required for the energy-dependent secretion of extracellular factors such as proteases and toxins from the periplasm. Part of the pseudopilus tip complex that is critical for the recognition and binding of secretion substrates. This Dickeya chrysanthemi (Pectobacterium chrysanthemi) protein is Type II secretion system protein I (outI).